Reading from the N-terminus, the 921-residue chain is Isoleucine--tRNA ligase (921 aa).

The short motif at 57–67 (PYANGELHMGH) is the 'HIGH' region element. Residue Glu552 participates in L-isoleucyl-5'-AMP binding. The short motif at 593 to 597 (KMSKS) is the 'KMSKS' region element. Lys596 lines the ATP pocket. Positions 888, 891, 908, and 911 each coordinate Zn(2+).

This sequence belongs to the class-I aminoacyl-tRNA synthetase family. IleS type 1 subfamily. As to quaternary structure, monomer. It depends on Zn(2+) as a cofactor.

Its subcellular location is the cytoplasm. It carries out the reaction tRNA(Ile) + L-isoleucine + ATP = L-isoleucyl-tRNA(Ile) + AMP + diphosphate. Its function is as follows. Catalyzes the attachment of isoleucine to tRNA(Ile). As IleRS can inadvertently accommodate and process structurally similar amino acids such as valine, to avoid such errors it has two additional distinct tRNA(Ile)-dependent editing activities. One activity is designated as 'pretransfer' editing and involves the hydrolysis of activated Val-AMP. The other activity is designated 'posttransfer' editing and involves deacylation of mischarged Val-tRNA(Ile). This is Isoleucine--tRNA ligase from Listeria innocua serovar 6a (strain ATCC BAA-680 / CLIP 11262).